Here is a 408-residue protein sequence, read N- to C-terminus: Imidazolonepropionase (408 aa).

Fe(3+)-binding residues include His-73 and His-75. Residues His-73 and His-75 each contribute to the Zn(2+) site. 4-imidazolone-5-propanoate contacts are provided by Arg-82, Tyr-145, and His-178. Tyr-145 is an N-formimidoyl-L-glutamate binding site. His-243 contacts Fe(3+). Zn(2+) is bound at residue His-243. Gln-246 is a binding site for 4-imidazolone-5-propanoate. Asp-318 contributes to the Fe(3+) binding site. A Zn(2+)-binding site is contributed by Asp-318. Asn-320 and Gly-322 together coordinate N-formimidoyl-L-glutamate. Ser-323 is a 4-imidazolone-5-propanoate binding site.

Belongs to the metallo-dependent hydrolases superfamily. HutI family. Requires Zn(2+) as cofactor. The cofactor is Fe(3+).

The protein localises to the cytoplasm. The enzyme catalyses 4-imidazolone-5-propanoate + H2O = N-formimidoyl-L-glutamate. It participates in amino-acid degradation; L-histidine degradation into L-glutamate; N-formimidoyl-L-glutamate from L-histidine: step 3/3. In terms of biological role, catalyzes the hydrolytic cleavage of the carbon-nitrogen bond in imidazolone-5-propanoate to yield N-formimidoyl-L-glutamate. It is the third step in the universal histidine degradation pathway. This chain is Imidazolonepropionase, found in Shewanella baltica (strain OS195).